A 203-amino-acid polypeptide reads, in one-letter code: ATP-dependent Clp protease proteolytic subunit (203 aa).

Residue Ser-107 is the Nucleophile of the active site. Residue His-132 is part of the active site.

This sequence belongs to the peptidase S14 family. As to quaternary structure, fourteen ClpP subunits assemble into 2 heptameric rings which stack back to back to give a disk-like structure with a central cavity, resembling the structure of eukaryotic proteasomes.

It is found in the cytoplasm. The enzyme catalyses Hydrolysis of proteins to small peptides in the presence of ATP and magnesium. alpha-casein is the usual test substrate. In the absence of ATP, only oligopeptides shorter than five residues are hydrolyzed (such as succinyl-Leu-Tyr-|-NHMec, and Leu-Tyr-Leu-|-Tyr-Trp, in which cleavage of the -Tyr-|-Leu- and -Tyr-|-Trp bonds also occurs).. Functionally, cleaves peptides in various proteins in a process that requires ATP hydrolysis. Has a chymotrypsin-like activity. Plays a major role in the degradation of misfolded proteins. This chain is ATP-dependent Clp protease proteolytic subunit, found in Shewanella woodyi (strain ATCC 51908 / MS32).